A 178-amino-acid chain; its full sequence is Probable coatomer subunit zeta-B (178 aa).

It belongs to the adaptor complexes small subunit family. In terms of assembly, oligomeric complex that consists of at least the alpha, beta, beta', gamma, delta, epsilon and zeta subunits.

The protein resides in the cytoplasm. It is found in the golgi apparatus membrane. Its subcellular location is the cytoplasmic vesicle. It localises to the COPI-coated vesicle membrane. Functionally, the coatomer is a cytosolic protein complex that binds to dilysine motifs and reversibly associates with Golgi non-clathrin-coated vesicles, which further mediate biosynthetic protein transport from the ER, via the Golgi up to the trans Golgi network. Coatomer complex is required for budding from Golgi membranes, and is essential for the retrograde Golgi-to-ER transport of dilysine-tagged proteins. The zeta subunit may be involved in regulating the coat assembly and, hence, the rate of biosynthetic protein transport due to its association-dissociation properties with the coatomer complex. The sequence is that of Probable coatomer subunit zeta-B (copZb) from Dictyostelium discoideum (Social amoeba).